The sequence spans 364 residues: Long-wave-sensitive opsin 1 (364 aa).

The Extracellular portion of the chain corresponds to Met1–Val52. O-linked (GlcNAc) serine glycosylation is present at Ser22. Asn34 carries N-linked (GlcNAc...) asparagine glycosylation. The chain crosses the membrane as a helical span at residues Tyr53–Ala77. Over Thr78–Asn89 the chain is Cytoplasmic. The helical transmembrane segment at Trp90–Met115 threads the bilayer. The Extracellular portion of the chain corresponds to Tyr116–Glu129. Cysteines 126 and 203 form a disulfide. A helical membrane pass occupies residues Gly130 to Trp149. At Glu150–Leu168 the chain is on the cytoplasmic side. The chain crosses the membrane as a helical span at residues Ala169–Ser192. The Extracellular segment spans residues Arg193–Ser218. A helical transmembrane segment spans residues Tyr219–Ile246. Residues Arg247–Arg268 are Cytoplasmic-facing. A helical membrane pass occupies residues Met269–Ala292. Topologically, residues Ala293–His300 are extracellular. The helical transmembrane segment at Pro301–Met325 threads the bilayer. Residue Lys312 is modified to N6-(retinylidene)lysine. At Asn326–Ala364 the chain is on the cytoplasmic side.

Belongs to the G-protein coupled receptor 1 family. Opsin subfamily. Phosphorylated on some or all of the serine and threonine residues present in the C-terminal region. Expressed in retina (at protein level). Expressed in cone and/or rod photoreceptor cells (at protein level).

The protein localises to the membrane. Functionally, visual pigments are the light-absorbing molecules that mediate vision. They consist of an apoprotein, opsin, covalently linked to cis-retinal. The protein is Long-wave-sensitive opsin 1 (OPN1LW) of Bos taurus (Bovine).